The following is a 486-amino-acid chain: Glutamyl-tRNA(Gln) amidotransferase subunit A (486 aa).

Residues Lys76 and Ser151 each act as charge relay system in the active site. Catalysis depends on Ser175, which acts as the Acyl-ester intermediate.

The protein belongs to the amidase family. GatA subfamily. As to quaternary structure, heterotrimer of A, B and C subunits.

It catalyses the reaction L-glutamyl-tRNA(Gln) + L-glutamine + ATP + H2O = L-glutaminyl-tRNA(Gln) + L-glutamate + ADP + phosphate + H(+). Its function is as follows. Allows the formation of correctly charged Gln-tRNA(Gln) through the transamidation of misacylated Glu-tRNA(Gln) in organisms which lack glutaminyl-tRNA synthetase. The reaction takes place in the presence of glutamine and ATP through an activated gamma-phospho-Glu-tRNA(Gln). The chain is Glutamyl-tRNA(Gln) amidotransferase subunit A from Nitrosomonas europaea (strain ATCC 19718 / CIP 103999 / KCTC 2705 / NBRC 14298).